The sequence spans 334 residues: Leucine-rich repeat-containing protein 26 (334 aa).

An N-terminal signal peptide occupies residues 1-26; the sequence is MRGPSWSRPRPLLLLLLLLSPWPVWA. Topologically, residues 27 to 261 are extracellular; that stretch reads QVSATASPSG…HCAQPLALRD (235 aa). The 38-residue stretch at 34–71 folds into the LRRNT domain; the sequence is PSGSLGAPDCPEVCTCVPGGLASCSALSLPAVPPGLSL. 2 cysteine pairs are disulfide-bonded: cysteine 43-cysteine 49 and cysteine 47-cysteine 57. LRR repeat units follow at residues 72–93, 96–117, 120–141, 144–167, and 168–190; these read RLRA…AFAG, ALQR…AFWG, ALQL…TFAP, ALRN…GALP, and LLRS…LGRL. Asparagine 147 carries an N-linked (GlcNAc...) asparagine glycan. In terms of domain architecture, LRRCT spans 201–255; that stretch reads NPWGCGCALRPLCAWLRRHPLPASEAETVLCVWPGRLTLSPLTAFSDAAFSHCAQ. Intrachain disulfides connect cysteine 205–cysteine 231 and cysteine 207–cysteine 253. A helical transmembrane segment spans residues 262–282; that stretch reads LAVVYTLGPASFLVSLASCLA. At 283–334 the chain is on the cytoplasmic side; it reads LGSGLTACRARRRRLRTAALRPPRPPDPNPDPDPHGCASPADPGSPAAAAQA. Residues 298–334 are disordered; that stretch reads RTAALRPPRPPDPNPDPDPHGCASPADPGSPAAAAQA. Pro residues predominate over residues 304 to 313; sequence PPRPPDPNPD. The span at 320-334 shows a compositional bias: low complexity; the sequence is ASPADPGSPAAAAQA.

Interacts with KCNMA1. In terms of tissue distribution, isoform 1 is expressed highly in normal prostate and salivary gland, very weakly in colon, pancreas, and intestine, and not at all in other tissues. Isoform 1 is expressed highly in many cancer cell lines and in breast cancer, pancreatic cancer and colon cancer. Isoform 2 is expressed in cancer cell lines.

It localises to the cell membrane. Its subcellular location is the cytoplasm. The protein resides in the cytoskeleton. Its function is as follows. Auxiliary protein of the large-conductance, voltage and calcium-activated potassium channel (BK alpha). Required for the conversion of BK alpha channels from a high-voltage to a low-voltage activated channel type in non-excitable cells. These are characterized by negative membrane voltages and constant low levels of calcium. This Homo sapiens (Human) protein is Leucine-rich repeat-containing protein 26 (LRRC26).